Consider the following 314-residue polypeptide: 2,3-dihydroxyphenylpropionate/2,3-dihydroxicinnamic acid 1,2-dioxygenase (314 aa).

The active-site Proton donor is His115. Residue His179 is the Proton acceptor of the active site.

This sequence belongs to the LigB/MhpB extradiol dioxygenase family. Homotetramer. It depends on Fe(2+) as a cofactor.

It catalyses the reaction 3-(2,3-dihydroxyphenyl)propanoate + O2 = (2Z,4E)-2-hydroxy-6-oxonona-2,4-dienedioate + H(+). The enzyme catalyses (2E)-3-(2,3-dihydroxyphenyl)prop-2-enoate + O2 = (2Z,4E,7E)-2-hydroxy-6-oxonona-2,4,7-trienedioate + H(+). It participates in aromatic compound metabolism; 3-phenylpropanoate degradation. Catalyzes the non-heme iron(II)-dependent oxidative cleavage of 2,3-dihydroxyphenylpropionic acid and 2,3-dihydroxicinnamic acid into 2-hydroxy-6-ketononadienedioate and 2-hydroxy-6-ketononatrienedioate, respectively. This is 2,3-dihydroxyphenylpropionate/2,3-dihydroxicinnamic acid 1,2-dioxygenase from Escherichia coli O81 (strain ED1a).